A 428-amino-acid polypeptide reads, in one-letter code: CRISPR system endoribonuclease Csm6 (428 aa).

A CARF domain region spans residues 1–145; the sequence is MKILISAVGT…RANREYTALT (145 aa). The interval 146 to 428 is HEPN domain; the sequence is ESEIDALIME…QNKELIKMLE (283 aa).

It belongs to the CRISPR-associated Csm6 family. Homodimer. The composite ssRNase active site is formed at the dimer interface.

Non-specific ssRNase activity is allosterically activated about 1000-fold by cyclic hexaadenylate (cA6), a second messenger produced by Cas10 of the ternary Csm effector complex in the presence of a cognate target RNA. ssRNase activity is inhibited by physiological concentrations of ATP (1 mM), activity is restored by cOA. Functionally, CRISPR (clustered regularly interspaced short palindromic repeat) is an adaptive immune system that provides protection against mobile genetic elements (viruses, transposable elements and conjugative plasmids). CRISPR clusters contain spacers, sequences complementary to antecedent mobile elements, and target invading nucleic acids. CRISPR clusters are transcribed and processed into CRISPR RNA (crRNA). The type III-A Csm complex binds crRNA and acts as a crRNA-guided RNase, DNase and cyclic oligoadenylate synthase; binding of target RNA cognate to the crRNA is required for all activities. In a heterologous host this Csm effector complex restricts ssRNA phage MS2, suggesting it may target RNA viruses in vivo. This protein is not part of the Csm complex. Csm functions as a non-specific ssDNase. Base-pairing between crRNA and target RNA to form a ternary Csm complex activates a ssDNase activity; target RNA cleavage suppresses the ssDNase, a temporal control that prevents uncontrolled DNA degradation. Viral RNA transcripts probably tether the Csm complex to the viral genome, recruiting Cas10 ssDNA activity which is able to degrade DNA in the transcription bubble, spatially controlling the DNase activity. Its function is as follows. A single-strand-specific endoribonuclease (ssRNase) that is approximately 1000-fold stimulated by cyclic oligoadenylate (cOA); although several species of cOA are synthesized by this organism only cyclic hexaadenylate (cA6) stimulates the ssRNase activity. Cleaves preferentially within GA or AA dinucleotides, although the presence of cA6 broadens the preference. Linear oligoadenylates do not activate the RNase. This Streptococcus thermophilus protein is CRISPR system endoribonuclease Csm6.